The sequence spans 193 residues: Acyl carrier protein phosphodiesterase (193 aa).

The protein belongs to the AcpH family.

The catalysed reaction is holo-[ACP] + H2O = apo-[ACP] + (R)-4'-phosphopantetheine + H(+). Its function is as follows. Converts holo-ACP to apo-ACP by hydrolytic cleavage of the phosphopantetheine prosthetic group from ACP. This is Acyl carrier protein phosphodiesterase from Escherichia coli O7:K1 (strain IAI39 / ExPEC).